The chain runs to 38 residues: Defensin-like peptide 3 (38 aa).

2 disulfides stabilise this stretch: Cys-6–Cys-36 and Cys-13–Cys-29.

Produced by the crural gland and detected in venom from the spur located on each male hind leg.

The protein localises to the secreted. Does not show antimicrobial, myotoxic, hemolytic and cell-promoting activities. The protein is Defensin-like peptide 3 of Ornithorhynchus anatinus (Duckbill platypus).